Reading from the N-terminus, the 290-residue chain is Arylamine N-acetyltransferase 1 (290 aa).

Residue Met1 is modified to N-acetylmethionine. Residue Cys68 is the Acyl-thioester intermediate of the active site. 2 residues coordinate CoA: Thr103 and Gly104. Residue 106 to 107 (IH) coordinates substrate. Catalysis depends on residues His107 and Asp122. Residues Tyr208 and Ser214 each coordinate CoA.

It belongs to the arylamine N-acetyltransferase family.

Its subcellular location is the cytoplasm. The enzyme catalyses an arylamine + acetyl-CoA = an N-acetylarylamine + CoA. Functionally, participates in the detoxification of a plethora of hydrazine and arylamine drugs. Catalyzes the N- or O-acetylation of various arylamine and heterocyclic amine substrates and is able to bioactivate several known carcinogens. The sequence is that of Arylamine N-acetyltransferase 1 (NAT1) from Homo sapiens (Human).